A 454-amino-acid polypeptide reads, in one-letter code: Histidine--tRNA ligase (454 aa).

This sequence belongs to the class-II aminoacyl-tRNA synthetase family. As to quaternary structure, homodimer.

Its subcellular location is the cytoplasm. It carries out the reaction tRNA(His) + L-histidine + ATP = L-histidyl-tRNA(His) + AMP + diphosphate + H(+). This is Histidine--tRNA ligase from Bacteroides fragilis (strain YCH46).